An 86-amino-acid chain; its full sequence is Kappa-theraphotoxin-Cg1a 6 (86 aa).

The first 21 residues, 1–21, serve as a signal peptide directing secretion; that stretch reads MKVSVLITLAVLGVMFVWASA. The propeptide occupies 22-50; the sequence is AELEERGSDQRDSPAWLKSMERIFQSEER. Cystine bridges form between Cys52-Cys66, Cys59-Cys71, and Cys65-Cys78. Phe84 carries the post-translational modification Phenylalanine amide.

The protein belongs to the neurotoxin 10 (Hwtx-1) family. 28 (Jztx-11) subfamily. As to expression, expressed by the venom gland.

It is found in the secreted. Its function is as follows. This toxin acts as a voltage-dependent gating-modifier. It inhibits the sodium conductance (IC(50)=124 nM) and slows the fast inactivation (EC(50)=1180 nM) of Nav1.5/SCN5A. It significantly shifts the activation to more depolarized voltages and decreases the deactivation of Nav1.5 currents upon extreme depolarization, but only slightly affects voltage-dependence of steady-state inactivation. In addition, this toxin causes an approximately five-fold decrease in the rate of recovery from inactivation and an approximately 1.9-fold reduction in the closed-state inactivation rate. This toxin integrates the functions of site 3 toxins (alpha-scorpion toxins) with site 4 toxins (beta-scorpion and spider toxins) by targeting multiple sites on Nav1.5. Also shows inhibition of voltage-gated potassium channels (5 uM completely inhibits Kv2.1/KCNB1, whereas 5 uM moderately inhibits Kv4.2/KCND2 Kv4.1/KCND1 channels). The sequence is that of Kappa-theraphotoxin-Cg1a 6 from Chilobrachys guangxiensis (Chinese earth tiger tarantula).